Here is a 1462-residue protein sequence, read N- to C-terminus: Protein peg1 (1462 aa).

Disordered regions lie at residues 528-563 and 573-592; these read SFSK…SRER and FHST…SIAI. 2 stretches are compositionally biased toward low complexity: residues 538-552 and 574-589; these read SSNS…RLGL and HSTS…HSPS. The residue at position 599 (S599) is a Phosphoserine. A disordered region spans residues 838–928; it reads SSTHQEHLSK…NCSEESLDDH (91 aa). Positions 847 to 866 are enriched in low complexity; it reads KNLPTLNTSSSSNSSQTDLL. Residues 870–896 show a composition bias toward basic and acidic residues; the sequence is GKGETKETEMQSPIESKEGLLSKDTHI. S1221 is modified (phosphoserine). Positions 1342–1367 form a coiled coil; it reads TLIAEIADLQGLYEFTQQRLQSLNTE.

Belongs to the CLASP family. As to quaternary structure, interacts with microtubules. Interacts with dhc1, mal3 and tea1.

It is found in the cytoplasm. The protein localises to the cytoskeleton. Its subcellular location is the spindle. The protein resides in the microtubule organizing center. It localises to the spindle pole body. Its function is as follows. Microtubule binding protein that regulates the stability of dynamic microtubules. Required for mitotic spindle formation. This is Protein peg1 (peg1) from Schizosaccharomyces pombe (strain 972 / ATCC 24843) (Fission yeast).